We begin with the raw amino-acid sequence, 664 residues long: Acid beta-fructofuranosidase 4, vacuolar (664 aa).

The Cytoplasmic segment spans residues 1-43 (MASSDALLPISAREEEPLCPYTRLPMADPNQETHGPRRRRPFK). The propeptide at 1–108 (MASSDALLPI…WKLSGDRNTP (108 aa)) is removed in mature form. 2 consecutive short sequence motifs (critical for endoplasmic reticulum export) follow at residues 7-8 (LL) and 9-10 (PI). The Critical for trafficking from the trans-Golgi network to the prevacuolar compartment and from the prevacuolar compartment to the central vacuole signature appears at 14-16 (EEE). A helical; Signal-anchor for type II membrane protein membrane pass occupies residues 44 to 64 (GLLAVSFGLLFIAFYVALIAT). Residues 65–664 (HDGSRSNDEG…DEAVRALSRT (600 aa)) lie on the Lumenal side of the membrane. Residue Asn113 is glycosylated (N-linked (GlcNAc...) asparagine). Substrate-binding positions include 132 to 135 (WMND), Gln151, Trp159, 194 to 195 (WT), and 258 to 259 (RD). The active site involves Asp135. Asn280 carries N-linked (GlcNAc...) (complex) asparagine glycosylation. Residues Glu313 and Asp346 each contribute to the substrate site. 2 N-linked (GlcNAc...) asparagine glycosylation sites follow: Asn362 and Asn498. Cys510 and Cys558 are disulfide-bonded.

This sequence belongs to the glycosyl hydrolase 32 family. In terms of assembly, may be present in two forms, a 70 kDa monomer and a heterodimer of the 30 kDa and 38 kDa subunits. The ratio of the levels of the two forms within cells appears to be regulated developmentally. Mostly expressed in stems, roots and flowers, and, to a lower extent, in mature leaves.

It localises to the vacuole. Its subcellular location is the endoplasmic reticulum membrane. The protein resides in the golgi apparatus membrane. It is found in the golgi apparatus. The protein localises to the trans-Golgi network membrane. It localises to the prevacuolar compartment membrane. Its subcellular location is the vacuole membrane. The protein resides in the vacuole lumen. The enzyme catalyses Hydrolysis of terminal non-reducing beta-D-fructofuranoside residues in beta-D-fructofuranosides.. The protein operates within glycan biosynthesis; sucrose metabolism. With respect to regulation, inhibited by C/VIF1 and C/VIF2. Functionally, possible role in the continued mobilization of sucrose to sink organs. Regulates root elongation. The protein is Acid beta-fructofuranosidase 4, vacuolar of Arabidopsis thaliana (Mouse-ear cress).